The following is a 324-amino-acid chain: uncharacterized protein (324 aa).

The protein to the C-terminal of para-aminobenzoate synthase component I.

This is an uncharacterized protein from Pasteurella multocida (strain Pm70).